Consider the following 755-residue polypeptide: Cartilage oligomeric matrix protein (755 aa).

The N-terminal stretch at 1 to 19 is a signal peptide; the sequence is MSPTACVLVLALAALRATG. Positions 21-84 are COMP N-terminal; that stretch reads GQIPLGGDLA…PARTPGLSVR (64 aa). Residues 85–124 form the EGF-like 1 domain; the sequence is PVALCAPGSCFPGVVCTETATGARCGPCPPGYTGNGSHCT. 21 cysteine pairs are disulfide-bonded: C89–C100, C94–C109, C112–C123, C129–C140, C134–C149, C152–C176, C182–C195, C189–C204, C207–C219, C227–C241, C235–C251, C253–C264, C280–C285, C290–C310, C326–C346, C349–C369, C385–C405, C408–C428, C446–C466, C482–C502, and C518–C739. N119 is a glycosylation site (N-linked (GlcNAc...) asparagine). In terms of domain architecture, EGF-like 2; calcium-binding spans 125 to 177; the sequence is DVNECNAHPCFPRVRCINTSPGFHCEACPPGFSGPTHEGVGLTFAKTNKQVCT. The EGF-like 3; calcium-binding domain maps to 178–220; it reads DINECETGQHNCVPNSVCVNTRGSFQCGPCQPGFVGDQRSGCQ. The 43-residue stretch at 223-265 folds into the EGF-like 4 domain; that stretch reads GQHFCPDGSPSPCHEKADCILERDGSRSCVCAVGWAGNGLLCG. TSP type-3 repeat units follow at residues 266–298, 299–334, 335–357, 358–393, 394–416, 417–454, 455–490, and 491–526; these read RDTD…NSGQ, EDVD…NPDQ, RNSD…NDDQ, KDTD…NFDQ, SDSD…NPDQ, RDVD…NSAQ, QDSD…NPGQ, and EDND…EVTL. The tract at residues 295–501 is disordered; it reads NSGQEDVDRD…DNDRDGVGDA (207 aa). 2 stretches are compositionally biased toward basic and acidic residues: residues 332–344 and 350–365; these read PDQR…KWGD and RSQK…RDGQ. S394 is subject to Phosphoserine. Basic and acidic residues-rich tracts occupy residues 412–424 and 456–465; these read DNPD…HDFV and DSDHDGKGDA. A mediates cell survival and induction of the IAP family of survival proteins region spans residues 525–755; sequence TLTDFRAFQT…DYERHRLRRA (231 aa). Positions 530 to 744 constitute a TSP C-terminal domain; it reads RAFQTVVLDP…LRYRCNDTIP (215 aa). N740 carries an N-linked (GlcNAc...) asparagine glycan.

The protein belongs to the thrombospondin family. Pentamer; disulfide-linked. Exists in a more compact conformation in the presence of calcium and shows a more extended conformation in the absence of calcium. Interacts with ITGB3, ITGA5 and FN1. Binding to FN1 requires the presence of divalent cations (Ca(2+), Mg(2+) or Mn(2+)). The greatest amount of binding is seen in the presence of Mn(2+). Interacts with MATN1, MATN3, MATN4 and ACAN. Binds heparin, heparan sulfate and chondroitin sulfate. EDTA dimishes significantly its binding to ACAN and abolishes its binding to MATN3, MATN4 and chondroitin sulfate. Interacts with collagen I, II and IX, and interaction with these collagens is dependent on the presence of zinc ions. Interacts with ADAMTS12. Interacts with ITGA7. Ca(2+) is required as a cofactor. In terms of processing, proteolytically cleaved by metalloproteases ADAMTS4 and ADAMTS1 with ADAMTS4 showing more potent activity.

Its subcellular location is the secreted. It is found in the extracellular space. The protein localises to the extracellular matrix. In terms of biological role, plays a role in the structural integrity of cartilage via its interaction with other extracellular matrix proteins such as the collagens and fibronectin. Can mediate the interaction of chondrocytes with the cartilage extracellular matrix through interaction with cell surface integrin receptors. Could play a role in the pathogenesis of osteoarthritis. Potent suppressor of apoptosis in both primary chondrocytes and transformed cells. Suppresses apoptosis by blocking the activation of caspase-3 and by inducing the IAP family of survival proteins (BIRC3, BIRC2, BIRC5 and XIAP). Essential for maintaining a vascular smooth muscle cells (VSMCs) contractile/differentiated phenotype under physiological and pathological stimuli. Maintains this phenotype of VSMCs by interacting with ITGA7. This Rattus norvegicus (Rat) protein is Cartilage oligomeric matrix protein.